The sequence spans 1031 residues: Kinesin heavy chain (1031 aa).

Residues 8-325 (NIKVVCRVRP…LMFGQRAKTI (318 aa)) enclose the Kinesin motor domain. 84 to 91 (GQTSSGKT) contacts ATP. Residues 393–857 (PKQMTVHVSE…RDNADLRCEL (465 aa)) are a coiled coil. Residues 673-686 (TDQEDKKREEEDKM) are compositionally biased toward basic and acidic residues. Disordered regions lie at residues 673–692 (TDQEDKKREEEDKMQSATEM) and 906–1031 (RNFA…EQGS). The tract at residues 858–1031 (PKLERRLRAT…PLTTSGEQGS (174 aa)) is globular. Residues 932–949 (GSTGIRGGGYSGIRGGGS) are compositionally biased toward gly residues. Composition is skewed to polar residues over residues 964–977 (SHNNSFEKSLNPND) and 1014–1031 (RNNTPGKAPLTTSGEQGS).

This sequence belongs to the TRAFAC class myosin-kinesin ATPase superfamily. Kinesin family. Kinesin subfamily. In terms of assembly, oligomer composed of two heavy chains and two light chains.

The protein resides in the cytoplasm. It localises to the cytoskeleton. Kinesin is a microtubule-associated force-producing protein that may play a role in organelle transport. The sequence is that of Kinesin heavy chain from Strongylocentrotus purpuratus (Purple sea urchin).